A 377-amino-acid chain; its full sequence is Aquaporin-2 (377 aa).

Over 1–14 the chain is Cytoplasmic; it reads MAANKGINGGIKNH. Residues 15-35 form a helical membrane-spanning segment; it reads FIAFLGEFVGTFLFLFFAYGG. The Extracellular segment spans residues 36–56; the sequence is TQTANQTSQKNPSIVASPDIN. An N-linked (GlcNAc...) asparagine glycan is attached at asparagine 40. A helical membrane pass occupies residues 57-77; the sequence is QLLYIALIFGFSLTVNVWIFF. Residues 78-87 lie on the Cytoplasmic side of the membrane; that stretch reads RVSGGLFNPA. Residues 85 to 87 carry the NPA 1 motif; the sequence is NPA. Residues 88–108 traverse the membrane as a helical segment; that stretch reads VTIALCLVGVVGPVRSIFIFI. Residues 109–144 lie on the Extracellular side of the membrane; the sequence is AQVVASIAAAAAVRGLLPGDTVLFSCALAPGTSIAQ. A helical transmembrane segment spans residues 145–165; sequence GLFLEMFFTIELVFTILMLAA. Over 166-171 the chain is Cytoplasmic; sequence EKTKVT. The helical transmembrane segment at 172–192 threads the bilayer; it reads FVAPVGIGLSLFVAELMGVAW. At 193–215 the chain is on the extracellular side; that stretch reads TGGALNPARAFGAEVIGGFRGYH. The NPA 2 signature appears at 198 to 200; sequence NPA. A helical membrane pass occupies residues 216 to 236; that stretch reads WIYWLGPLMGAVLAAGFYKVI. The Cytoplasmic portion of the chain corresponds to 237 to 377; sequence KFLNYEQVNG…ANAQNRAKTP (141 aa). 2 disordered regions span residues 278-332 and 358-377; these read LFQT…RENE and RLSG…AKTP. Composition is skewed to polar residues over residues 315-328 and 368-377; these read PAQQ…ASTI and ANAQNRAKTP.

This sequence belongs to the MIP/aquaporin (TC 1.A.8) family.

The protein resides in the membrane. The enzyme catalyses H2O(in) = H2O(out). It carries out the reaction glycerol(in) = glycerol(out). Its function is as follows. Water channel required to facilitate the transport of water across membranes. Involved in conidiation. This chain is Aquaporin-2, found in Botryotinia fuckeliana (strain B05.10) (Noble rot fungus).